A 668-amino-acid polypeptide reads, in one-letter code: Tastin (668 aa).

3 disordered regions span residues 1–102 (MTTL…GGSN), 154–177 (ERKGGTTQRGQSARSSAYLAPRIP), and 189–285 (FSRL…GRHH). Serine 16 is modified (phosphoserine). Composition is skewed to polar residues over residues 27-37 (QRCQDFSSVKS) and 55-64 (PRSTQRQRPL). Serine 97 is subject to Phosphoserine. A compositionally biased stretch (polar residues) spans 158-168 (GTTQRGQSARS). Serine 169 carries the phosphoserine modification. Basic and acidic residues-rich tracts occupy residues 227–246 (ELRRETCGGGRDGDCTDRRT) and 269–282 (GEQEAVPHSDDGGG). Residues serine 306, serine 324, and serine 338 each carry the phosphoserine modification. 2 disordered regions span residues 364–392 (ITLQKEPRKPSVASTSGPRPKRTPSHQEL) and 462–502 (TEPL…AEPE).

Directly binds bystin, and indirectly trophinin.

It localises to the cytoplasm. Could be involved with bystin and trophinin in a cell adhesion molecule complex that mediates an initial attachment of the blastocyst to uterine epithelial cells at the time of the embryo implantation. This Mus musculus (Mouse) protein is Tastin.